Consider the following 106-residue polypeptide: Small membrane A-kinase anchor protein (106 aa).

A lipid anchor (N-myristoyl glycine) is attached at glycine 2. A lipid anchor (S-palmitoyl cysteine) is attached at cysteine 3. Serine 40 carries the phosphoserine modification. The interval alanine 62–cysteine 85 is PKA-RI-binding. Serine 98 bears the Phosphoserine mark.

This sequence belongs to the small membrane AKAP family. As to quaternary structure, interacts with PKA type I regulatory subunits PRKAR1A and PRKAR1B. Also binds to type II regulatory subunits, but at a tenfold lower affinity. In terms of processing, may be palmitoylated at Cys-3. In terms of tissue distribution, widely expressed, with very low levels in spleen and liver.

It is found in the cell membrane. Its function is as follows. Binds to type I regulatory subunits of protein kinase A (PKA-RI) and may anchor/target them to the plasma membrane. This is Small membrane A-kinase anchor protein from Mus musculus (Mouse).